Here is a 248-residue protein sequence, read N- to C-terminus: tRNA (guanine-N(1)-)-methyltransferase (248 aa).

S-adenosyl-L-methionine is bound by residues G117 and I137–L142.

It belongs to the RNA methyltransferase TrmD family. As to quaternary structure, homodimer.

It localises to the cytoplasm. The enzyme catalyses guanosine(37) in tRNA + S-adenosyl-L-methionine = N(1)-methylguanosine(37) in tRNA + S-adenosyl-L-homocysteine + H(+). In terms of biological role, specifically methylates guanosine-37 in various tRNAs. The polypeptide is tRNA (guanine-N(1)-)-methyltransferase (Polynucleobacter necessarius subsp. necessarius (strain STIR1)).